The chain runs to 526 residues: Bifunctional purine biosynthesis protein PurH (526 aa).

One can recognise an MGS-like domain in the interval 1-145; it reads MSKAPLALLS…KNHAHVGIVT (145 aa).

It belongs to the PurH family.

The catalysed reaction is (6R)-10-formyltetrahydrofolate + 5-amino-1-(5-phospho-beta-D-ribosyl)imidazole-4-carboxamide = 5-formamido-1-(5-phospho-D-ribosyl)imidazole-4-carboxamide + (6S)-5,6,7,8-tetrahydrofolate. It catalyses the reaction IMP + H2O = 5-formamido-1-(5-phospho-D-ribosyl)imidazole-4-carboxamide. Its pathway is purine metabolism; IMP biosynthesis via de novo pathway; 5-formamido-1-(5-phospho-D-ribosyl)imidazole-4-carboxamide from 5-amino-1-(5-phospho-D-ribosyl)imidazole-4-carboxamide (10-formyl THF route): step 1/1. It participates in purine metabolism; IMP biosynthesis via de novo pathway; IMP from 5-formamido-1-(5-phospho-D-ribosyl)imidazole-4-carboxamide: step 1/1. This Psychrobacter cryohalolentis (strain ATCC BAA-1226 / DSM 17306 / VKM B-2378 / K5) protein is Bifunctional purine biosynthesis protein PurH.